We begin with the raw amino-acid sequence, 577 residues long: Proline--tRNA ligase (577 aa).

Belongs to the class-II aminoacyl-tRNA synthetase family. ProS type 1 subfamily. As to quaternary structure, homodimer.

The protein localises to the cytoplasm. It catalyses the reaction tRNA(Pro) + L-proline + ATP = L-prolyl-tRNA(Pro) + AMP + diphosphate. In terms of biological role, catalyzes the attachment of proline to tRNA(Pro) in a two-step reaction: proline is first activated by ATP to form Pro-AMP and then transferred to the acceptor end of tRNA(Pro). As ProRS can inadvertently accommodate and process non-cognate amino acids such as alanine and cysteine, to avoid such errors it has two additional distinct editing activities against alanine. One activity is designated as 'pretransfer' editing and involves the tRNA(Pro)-independent hydrolysis of activated Ala-AMP. The other activity is designated 'posttransfer' editing and involves deacylation of mischarged Ala-tRNA(Pro). The misacylated Cys-tRNA(Pro) is not edited by ProRS. This is Proline--tRNA ligase from Helicobacter pylori (strain P12).